The sequence spans 105 residues: Large ribosomal subunit protein uL24 (105 aa).

It belongs to the universal ribosomal protein uL24 family. In terms of assembly, part of the 50S ribosomal subunit.

One of two assembly initiator proteins, it binds directly to the 5'-end of the 23S rRNA, where it nucleates assembly of the 50S subunit. Its function is as follows. One of the proteins that surrounds the polypeptide exit tunnel on the outside of the subunit. This chain is Large ribosomal subunit protein uL24, found in Francisella philomiragia subsp. philomiragia (strain ATCC 25017 / CCUG 19701 / FSC 153 / O#319-036).